The chain runs to 238 residues: Ribonuclease PH (238 aa).

Phosphate-binding positions include Arg86 and 124–126; that span reads GTR.

It belongs to the RNase PH family. As to quaternary structure, homohexameric ring arranged as a trimer of dimers.

It carries out the reaction tRNA(n+1) + phosphate = tRNA(n) + a ribonucleoside 5'-diphosphate. Functionally, phosphorolytic 3'-5' exoribonuclease that plays an important role in tRNA 3'-end maturation. Removes nucleotide residues following the 3'-CCA terminus of tRNAs; can also add nucleotides to the ends of RNA molecules by using nucleoside diphosphates as substrates, but this may not be physiologically important. Probably plays a role in initiation of 16S rRNA degradation (leading to ribosome degradation) during starvation. This is Ribonuclease PH from Klebsiella pneumoniae (strain 342).